The primary structure comprises 305 residues: Regulator of microtubule dynamics protein 1 (305 aa).

Position 160 is an N6-succinyllysine (K160). TPR repeat units follow at residues 163–199 (AICI…NPKD) and 217–253 (PWYQ…DPNF). K245 is modified (N6-succinyllysine).

It belongs to the RMDN family. In terms of assembly, interacts with microtubules.

The protein resides in the cytoplasm. The protein localises to the cytoskeleton. Its subcellular location is the spindle. It is found in the spindle pole. In Mus musculus (Mouse), this protein is Regulator of microtubule dynamics protein 1 (Rmdn1).